The primary structure comprises 111 residues: T cell receptor alpha variable 18 (111 aa).

A signal peptide spans 1-20; sequence MLSASCSGLVILLIFRRTSG. The 91-residue stretch at 21–111 folds into the Ig-like domain; it reads DSVTQTEGPV…DSAVYYCALR (91 aa). A glycan (N-linked (GlcNAc...) asparagine) is linked at Asn41. An intrachain disulfide couples Cys42 to Cys108.

As to quaternary structure, alpha-beta TR is a heterodimer composed of an alpha and beta chain; disulfide-linked. The alpha-beta TR is associated with the transmembrane signaling CD3 coreceptor proteins to form the TR-CD3 (TcR or TCR). The assembly of alpha-beta TR heterodimers with CD3 occurs in the endoplasmic reticulum where a single alpha-beta TR heterodimer associates with one CD3D-CD3E heterodimer, one CD3G-CD3E heterodimer and one CD247 homodimer forming a stable octameric structure. CD3D-CD3E and CD3G-CD3E heterodimers preferentially associate with TR alpha and TR beta chains, respectively. The association of the CD247 homodimer is the last step of TcR assembly in the endoplasmic reticulum and is required for transport to the cell surface.

It is found in the cell membrane. V region of the variable domain of T cell receptor (TR) alpha chain that participates in the antigen recognition. Alpha-beta T cell receptors are antigen specific receptors which are essential to the immune response and are present on the cell surface of T lymphocytes. Recognize peptide-major histocompatibility (MH) (pMH) complexes that are displayed by antigen presenting cells (APC), a prerequisite for efficient T cell adaptive immunity against pathogens. Binding of alpha-beta TR to pMH complex initiates TR-CD3 clustering on the cell surface and intracellular activation of LCK that phosphorylates the ITAM motifs of CD3G, CD3D, CD3E and CD247 enabling the recruitment of ZAP70. In turn ZAP70 phosphorylates LAT, which recruits numerous signaling molecules to form the LAT signalosome. The LAT signalosome propagates signal branching to three major signaling pathways, the calcium, the mitogen-activated protein kinase (MAPK) kinase and the nuclear factor NF-kappa-B (NF-kB) pathways, leading to the mobilization of transcription factors that are critical for gene expression and essential for T cell growth and differentiation. The T cell repertoire is generated in the thymus, by V-(D)-J rearrangement. This repertoire is then shaped by intrathymic selection events to generate a peripheral T cell pool of self-MH restricted, non-autoaggressive T cells. Post-thymic interaction of alpha-beta TR with the pMH complexes shapes TR structural and functional avidity. The polypeptide is T cell receptor alpha variable 18 (Homo sapiens (Human)).